Reading from the N-terminus, the 470-residue chain is Membrane-bound lytic murein transglycosylase F (470 aa).

A signal peptide spans 1 to 21; the sequence is MLKEKLIIIITLVMLLCACDI. Residues 22 to 259 are non-LT domain; the sequence is QEQSTQLAQI…VLEEKYFGHV (238 aa). An LT domain region spans residues 260–470; it reads RQFNYVNTLA…PKIGDEVEAK (211 aa). Glutamate 304 is an active-site residue.

This sequence in the N-terminal section; belongs to the bacterial solute-binding protein 3 family. In the C-terminal section; belongs to the transglycosylase Slt family.

It is found in the cell outer membrane. It catalyses the reaction Exolytic cleavage of the (1-&gt;4)-beta-glycosidic linkage between N-acetylmuramic acid (MurNAc) and N-acetylglucosamine (GlcNAc) residues in peptidoglycan, from either the reducing or the non-reducing ends of the peptidoglycan chains, with concomitant formation of a 1,6-anhydrobond in the MurNAc residue.. Its function is as follows. Murein-degrading enzyme that degrades murein glycan strands and insoluble, high-molecular weight murein sacculi, with the concomitant formation of a 1,6-anhydromuramoyl product. Lytic transglycosylases (LTs) play an integral role in the metabolism of the peptidoglycan (PG) sacculus. Their lytic action creates space within the PG sacculus to allow for its expansion as well as for the insertion of various structures such as secretion systems and flagella. The chain is Membrane-bound lytic murein transglycosylase F from Pseudoalteromonas translucida (strain TAC 125).